The sequence spans 145 residues: D-aminoacyl-tRNA deacylase (145 aa).

Positions 137 to 138 match the Gly-cisPro motif, important for rejection of L-amino acids motif; it reads GP.

This sequence belongs to the DTD family. As to quaternary structure, homodimer.

It localises to the cytoplasm. The catalysed reaction is glycyl-tRNA(Ala) + H2O = tRNA(Ala) + glycine + H(+). It catalyses the reaction a D-aminoacyl-tRNA + H2O = a tRNA + a D-alpha-amino acid + H(+). In terms of biological role, an aminoacyl-tRNA editing enzyme that deacylates mischarged D-aminoacyl-tRNAs. Also deacylates mischarged glycyl-tRNA(Ala), protecting cells against glycine mischarging by AlaRS. Acts via tRNA-based rather than protein-based catalysis; rejects L-amino acids rather than detecting D-amino acids in the active site. By recycling D-aminoacyl-tRNA to D-amino acids and free tRNA molecules, this enzyme counteracts the toxicity associated with the formation of D-aminoacyl-tRNA entities in vivo and helps enforce protein L-homochirality. This chain is D-aminoacyl-tRNA deacylase, found in Pseudomonas putida (strain GB-1).